Here is an 81-residue protein sequence, read N- to C-terminus: Cell division protein ZapB (81 aa).

Positions 5–81 (LEVFEKLESK…QALLGRMEEV (77 aa)) form a coiled coil. The disordered stretch occupies residues 43–64 (VQSAQHGREELERENSQLKEQQ). A compositionally biased stretch (basic and acidic residues) spans 48–59 (HGREELERENSQ).

Belongs to the ZapB family. In terms of assembly, homodimer. The ends of the coiled-coil dimer bind to each other, forming polymers. Interacts with FtsZ.

It is found in the cytoplasm. Functionally, non-essential, abundant cell division factor that is required for proper Z-ring formation. It is recruited early to the divisome by direct interaction with FtsZ, stimulating Z-ring assembly and thereby promoting cell division earlier in the cell cycle. Its recruitment to the Z-ring requires functional FtsA or ZipA. The sequence is that of Cell division protein ZapB from Klebsiella pneumoniae subsp. pneumoniae (strain ATCC 700721 / MGH 78578).